A 155-amino-acid chain; its full sequence is Small ribosomal subunit protein bS6 (155 aa).

The span at 115–137 shows a compositional bias: basic and acidic residues; the sequence is EADAAKAEADAARVEAEAKKAET. Residues 115–155 form a disordered region; sequence EADAAKAEADAARVEAEAKKAETDETDETVDAETPENEEEN. Acidic residues predominate over residues 138–155; the sequence is DETDETVDAETPENEEEN.

The protein belongs to the bacterial ribosomal protein bS6 family.

Functionally, binds together with bS18 to 16S ribosomal RNA. This Desulforapulum autotrophicum (strain ATCC 43914 / DSM 3382 / VKM B-1955 / HRM2) (Desulfobacterium autotrophicum) protein is Small ribosomal subunit protein bS6.